A 68-amino-acid chain; its full sequence is DNA-directed RNA polymerase subunit omega (68 aa).

It belongs to the RNA polymerase subunit omega family. The RNAP catalytic core consists of 2 alpha, 1 beta, 1 beta' and 1 omega subunit. When a sigma factor is associated with the core the holoenzyme is formed, which can initiate transcription.

The enzyme catalyses RNA(n) + a ribonucleoside 5'-triphosphate = RNA(n+1) + diphosphate. Functionally, promotes RNA polymerase assembly. Latches the N- and C-terminal regions of the beta' subunit thereby facilitating its interaction with the beta and alpha subunits. The chain is DNA-directed RNA polymerase subunit omega from Sulfurovum sp. (strain NBC37-1).